A 625-amino-acid polypeptide reads, in one-letter code: ATP-dependent RNA helicase mrh4, mitochondrial (625 aa).

Residues 1-16 (MWKTARDSVCLICRSA) constitute a mitochondrion transit peptide. Low complexity predominate over residues 19 to 28 (TTTSTSARAS). The tract at residues 19–119 (TTTSTSARAS…DKNTKGQKAL (101 aa)) is disordered. Residues 90-113 (DPRKAPKPKPVEEDSRRDKRDKNT) show a composition bias toward basic and acidic residues. Positions 144–177 (QAFDQFDLLPVVKEAIAQEALKGMTEIKPTPVQR) match the Q motif motif. Residues 195–406 (PKSDNGREEF…EEQFPYINRI (212 aa)) form the Helicase ATP-binding domain. 208 to 215 (AETGSGKT) provides a ligand contact to ATP. The DEAD box signature appears at 353 to 356 (DEAD). One can recognise a Helicase C-terminal domain in the interval 453-625 (EGPKSEIDVK…ESMFMGQALV (173 aa)).

It belongs to the DEAD box helicase family. MRH4 subfamily.

It localises to the mitochondrion. The enzyme catalyses ATP + H2O = ADP + phosphate + H(+). Its function is as follows. ATP-binding RNA helicase involved in mitochondrial RNA metabolism. Required for maintenance of mitochondrial DNA. The protein is ATP-dependent RNA helicase mrh4, mitochondrial (drh-15) of Neurospora crassa (strain ATCC 24698 / 74-OR23-1A / CBS 708.71 / DSM 1257 / FGSC 987).